A 361-amino-acid chain; its full sequence is ATP phosphoribosyltransferase regulatory subunit (361 aa).

Belongs to the class-II aminoacyl-tRNA synthetase family. HisZ subfamily. In terms of assembly, heteromultimer composed of HisG and HisZ subunits.

It localises to the cytoplasm. It functions in the pathway amino-acid biosynthesis; L-histidine biosynthesis; L-histidine from 5-phospho-alpha-D-ribose 1-diphosphate: step 1/9. Required for the first step of histidine biosynthesis. May allow the feedback regulation of ATP phosphoribosyltransferase activity by histidine. This is ATP phosphoribosyltransferase regulatory subunit from Thermus thermophilus (strain ATCC 27634 / DSM 579 / HB8).